A 385-amino-acid polypeptide reads, in one-letter code: 8-amino-7-oxononanoate synthase (385 aa).

Arg21 provides a ligand contact to substrate. 108 to 109 is a binding site for pyridoxal 5'-phosphate; that stretch reads GF. Residue His133 participates in substrate binding. Ser179, His207, and Thr233 together coordinate pyridoxal 5'-phosphate. At Lys236 the chain carries N6-(pyridoxal phosphate)lysine. Residue Thr352 participates in substrate binding.

This sequence belongs to the class-II pyridoxal-phosphate-dependent aminotransferase family. BioF subfamily. In terms of assembly, homodimer. Requires pyridoxal 5'-phosphate as cofactor.

It catalyses the reaction 6-carboxyhexanoyl-[ACP] + L-alanine + H(+) = (8S)-8-amino-7-oxononanoate + holo-[ACP] + CO2. Its pathway is cofactor biosynthesis; biotin biosynthesis. Functionally, catalyzes the decarboxylative condensation of pimeloyl-[acyl-carrier protein] and L-alanine to produce 8-amino-7-oxononanoate (AON), [acyl-carrier protein], and carbon dioxide. This is 8-amino-7-oxononanoate synthase from Salmonella agona (strain SL483).